Here is a 283-residue protein sequence, read N- to C-terminus: Thymidylate synthase (283 aa).

R22 contributes to the dUMP binding site. Catalysis depends on C160, which acts as the Nucleophile. DUMP-binding positions include 180–183, N191, and 221–223; these read RSCD and HIY. D183 provides a ligand contact to (6R)-5,10-methylene-5,6,7,8-tetrahydrofolate. Residue S282 coordinates (6R)-5,10-methylene-5,6,7,8-tetrahydrofolate.

The protein belongs to the thymidylate synthase family. Bacterial-type ThyA subfamily. Homodimer.

The protein resides in the cytoplasm. The catalysed reaction is dUMP + (6R)-5,10-methylene-5,6,7,8-tetrahydrofolate = 7,8-dihydrofolate + dTMP. The protein operates within pyrimidine metabolism; dTTP biosynthesis. In terms of biological role, catalyzes the reductive methylation of 2'-deoxyuridine-5'-monophosphate (dUMP) to 2'-deoxythymidine-5'-monophosphate (dTMP) while utilizing 5,10-methylenetetrahydrofolate (mTHF) as the methyl donor and reductant in the reaction, yielding dihydrofolate (DHF) as a by-product. This enzymatic reaction provides an intracellular de novo source of dTMP, an essential precursor for DNA biosynthesis. The chain is Thymidylate synthase from Pseudoalteromonas translucida (strain TAC 125).